We begin with the raw amino-acid sequence, 313 residues long: tRNA dimethylallyltransferase (313 aa).

11–18 is an ATP binding site; the sequence is GPTAAGKS. 13 to 18 contributes to the substrate binding site; sequence TAAGKS. Interaction with substrate tRNA stretches follow at residues 36–39, 160–164, and 244–249; these read DSAT, QRIQR, and RCVGYR.

The protein belongs to the IPP transferase family. In terms of assembly, monomer. Mg(2+) serves as cofactor.

The catalysed reaction is adenosine(37) in tRNA + dimethylallyl diphosphate = N(6)-dimethylallyladenosine(37) in tRNA + diphosphate. Its function is as follows. Catalyzes the transfer of a dimethylallyl group onto the adenine at position 37 in tRNAs that read codons beginning with uridine, leading to the formation of N6-(dimethylallyl)adenosine (i(6)A). The chain is tRNA dimethylallyltransferase from Bordetella parapertussis (strain 12822 / ATCC BAA-587 / NCTC 13253).